A 157-amino-acid chain; its full sequence is Cyclic pyranopterin monophosphate synthase (157 aa).

Substrate is bound by residues 74-76 (MCH) and 112-113 (ME). Asp-127 is an active-site residue.

Belongs to the MoaC family. In terms of assembly, homohexamer; trimer of dimers.

It carries out the reaction (8S)-3',8-cyclo-7,8-dihydroguanosine 5'-triphosphate = cyclic pyranopterin phosphate + diphosphate. It functions in the pathway cofactor biosynthesis; molybdopterin biosynthesis. Its function is as follows. Catalyzes the conversion of (8S)-3',8-cyclo-7,8-dihydroguanosine 5'-triphosphate to cyclic pyranopterin monophosphate (cPMP). The sequence is that of Cyclic pyranopterin monophosphate synthase from Campylobacter jejuni subsp. jejuni serotype O:2 (strain ATCC 700819 / NCTC 11168).